Reading from the N-terminus, the 208-residue chain is Uracil phosphoribosyltransferase (208 aa).

5-phospho-alpha-D-ribose 1-diphosphate-binding positions include arginine 78, arginine 103, and 130-138; that span reads DPMFATGGT. Residues isoleucine 193 and 198-200 each bind uracil; that span reads GDA. Residue aspartate 199 coordinates 5-phospho-alpha-D-ribose 1-diphosphate.

This sequence belongs to the UPRTase family. Mg(2+) serves as cofactor.

The catalysed reaction is UMP + diphosphate = 5-phospho-alpha-D-ribose 1-diphosphate + uracil. The protein operates within pyrimidine metabolism; UMP biosynthesis via salvage pathway; UMP from uracil: step 1/1. Allosterically activated by GTP. Its function is as follows. Catalyzes the conversion of uracil and 5-phospho-alpha-D-ribose 1-diphosphate (PRPP) to UMP and diphosphate. This chain is Uracil phosphoribosyltransferase, found in Campylobacter jejuni (strain RM1221).